A 762-amino-acid polypeptide reads, in one-letter code: Alpha-xylosidase XylQ (762 aa).

D414 serves as the catalytic Nucleophile. The active site involves E417.

It belongs to the glycosyl hydrolase 31 family.

It is found in the cell membrane. It catalyses the reaction Hydrolysis of terminal, non-reducing alpha-D-xylose residues with release of alpha-D-xylose.. Functionally, involved in the metabolism of isoprimeverose. Hydrolyzes isoprimeverose into equimolar amounts of glucose and xylose. In vitro, can also use p-nitrophenyl-alpha-D-xylopyranoside (alpha-p-NPX). This is Alpha-xylosidase XylQ from Lactiplantibacillus pentosus (Lactobacillus pentosus).